The sequence spans 392 residues: MINNTDNEYLEQKLSELSKKVPASIISKLRESITNSPIEITRDEIDKIIEIVMKDYLSSLVHPGEAIGVVAAQSIGEPGTQMTLRTFHFAGVRELNVTLGLPRLIEIVDARKVPSTPMMTIYLNEEYAKDRDMALEVARRIEYTRVEHVVETVNLDVGGMGIILKLDPVLLKDKGLSTEDVEKVIKKLKMGDYRVENSDEYTIAIYFENMETVTGLFKAREKILSTKIKGVKGIKRAIIRKKGDEYVIITDGSNLEGVLGVKGVDVSRIETNNLHEVESVLGVEAARELITREIKRVLEEQGLDVDIRHIELVSDIMTRTGEVRQIGRHGVTGEKTSVLARAAFEVTVKHLLDAAARGDMEEFKGVVENIIIGQPIKLGTGMVELLMRPANR.

The protein belongs to the RNA polymerase beta' chain family. Part of the RNA polymerase complex.

The protein localises to the cytoplasm. It carries out the reaction RNA(n) + a ribonucleoside 5'-triphosphate = RNA(n+1) + diphosphate. Functionally, DNA-dependent RNA polymerase (RNAP) catalyzes the transcription of DNA into RNA using the four ribonucleoside triphosphates as substrates. Forms part of the jaw domain. In Metallosphaera sedula (strain ATCC 51363 / DSM 5348 / JCM 9185 / NBRC 15509 / TH2), this protein is DNA-directed RNA polymerase subunit Rpo1C.